A 665-amino-acid chain; its full sequence is DNA ligase (665 aa).

NAD(+) contacts are provided by residues D35–D39, S88–L89, and E117. Catalysis depends on K119, which acts as the N6-AMP-lysine intermediate. R140, E174, K290, and K314 together coordinate NAD(+). Positions 406, 409, 424, and 429 each coordinate Zn(2+). The BRCT domain maps to K588–S665.

It belongs to the NAD-dependent DNA ligase family. LigA subfamily. The cofactor is Mg(2+). It depends on Mn(2+) as a cofactor.

It catalyses the reaction NAD(+) + (deoxyribonucleotide)n-3'-hydroxyl + 5'-phospho-(deoxyribonucleotide)m = (deoxyribonucleotide)n+m + AMP + beta-nicotinamide D-nucleotide.. Functionally, DNA ligase that catalyzes the formation of phosphodiester linkages between 5'-phosphoryl and 3'-hydroxyl groups in double-stranded DNA using NAD as a coenzyme and as the energy source for the reaction. It is essential for DNA replication and repair of damaged DNA. The sequence is that of DNA ligase from Metamycoplasma arthritidis (strain 158L3-1) (Mycoplasma arthritidis).